The following is a 174-amino-acid chain: CD164 sialomucin-like 2 protein (174 aa).

Positions 1-29 (MEAPGPRALRTALCGGCCCLLLCAQLAVA) are cleaved as a signal peptide. The Extracellular segment spans residues 30–141 (GKGARGFGRG…AHSPGFDGAS (112 aa)). Residues Asn-71 and Asn-103 are each glycosylated (N-linked (GlcNAc...) asparagine). A helical membrane pass occupies residues 142–162 (FIGGVVLVLSLQAVAFFVLHF). At 163 to 174 (LKAKDSTYQTLI) the chain is on the cytoplasmic side.

The protein belongs to the CD164 family.

It localises to the membrane. In Homo sapiens (Human), this protein is CD164 sialomucin-like 2 protein (CD164L2).